A 306-amino-acid polypeptide reads, in one-letter code: Tyrosine recombinase XerC (306 aa).

The 90-residue stretch at 1-90 (MYVHIDNFLV…AWRSFYRYLY (90 aa)) folds into the Core-binding (CB) domain. In terms of domain architecture, Tyr recombinase spans 111 to 298 (RLPRFLYEDE…TGERLKKVYR (188 aa)). Active-site residues include Arg151, Lys175, His250, Arg253, and His276. The active-site O-(3'-phospho-DNA)-tyrosine intermediate is Tyr285.

It belongs to the 'phage' integrase family. XerC subfamily. Forms a cyclic heterotetrameric complex composed of two molecules of XerC and two molecules of XerD.

Its subcellular location is the cytoplasm. In terms of biological role, site-specific tyrosine recombinase, which acts by catalyzing the cutting and rejoining of the recombining DNA molecules. The XerC-XerD complex is essential to convert dimers of the bacterial chromosome into monomers to permit their segregation at cell division. It also contributes to the segregational stability of plasmids. The protein is Tyrosine recombinase XerC of Pelotomaculum thermopropionicum (strain DSM 13744 / JCM 10971 / SI).